The primary structure comprises 354 residues: Rhodopsin (354 aa).

The Extracellular segment spans residues 1 to 36 (MNGTEGPNFYVPFSNKSGVVRSPFEYPQYYLAEPWQ). 2 N-linked (GlcNAc...) asparagine glycosylation sites follow: Asn-2 and Asn-15. Residues 37 to 61 (YSVLAAYMFLLILLGFPVNFLTLYV) form a helical membrane-spanning segment. At 62–73 (TIQHKKLRTPLN) the chain is on the cytoplasmic side. A helical membrane pass occupies residues 74 to 96 (YILLNLAFANHFMVFGGFPVTMY). The Extracellular segment spans residues 97-110 (SSMHGYFVFGQTGC). Cys-110 and Cys-187 are oxidised to a cystine. A helical transmembrane segment spans residues 111-133 (YIEGFFATMGGEIALWSLVVLAI). The 'Ionic lock' involved in activated form stabilization signature appears at 134–136 (ERY). At 134-152 (ERYVVVCKPMSNFRFGENH) the chain is on the cytoplasmic side. Residues 153–173 (AIMGVMMTWIMALACAAPPLF) form a helical membrane-spanning segment. Residues 174 to 202 (GWSRYIPEGMQCSCGVDYYTLKPEVNNES) are Extracellular-facing. Residues 203–224 (FVIYMFLVHFTIPLMIIFFCYG) form a helical membrane-spanning segment. The Cytoplasmic portion of the chain corresponds to 225–252 (RLVCTVKEAAAQQQESATTQKAEKEVTR). Residues 253-274 (MVIIMVVAFLICWVPYASVAFY) form a helical membrane-spanning segment. At 275 to 286 (IFSNQGTDFGPI) the chain is on the extracellular side. Residues 287–308 (FMTVPAFFAKSSAIYNPVIYIV) form a helical membrane-spanning segment. An N6-(retinylidene)lysine modification is found at Lys-296. At 309-354 (LNKQFRNCMITTICCGKNPFGDDETTSAATSKTEASSVSSSQVSPA) the chain is on the cytoplasmic side. S-palmitoyl cysteine attachment occurs at residues Cys-322 and Cys-323. Positions 332-354 (ETTSAATSKTEASSVSSSQVSPA) are disordered. The segment covering 334–354 (TSAATSKTEASSVSSSQVSPA) has biased composition (low complexity).

Belongs to the G-protein coupled receptor 1 family. Opsin subfamily. In terms of processing, contains one covalently linked retinal chromophore. Upon light absorption, the covalently bound 11-cis-retinal is converted to all-trans-retinal. After hydrolysis of the Schiff base and release of the covalently bound all-trans-retinal, active rhodopsin is regenerated by binding of a fresh molecule of 11-cis-retinal.

The protein localises to the membrane. It is found in the cell projection. The protein resides in the cilium. It localises to the photoreceptor outer segment. In terms of biological role, photoreceptor required for image-forming vision at low light intensity. Required for photoreceptor cell viability after birth. Light-induced isomerization of 11-cis to all-trans retinal triggers a conformational change that activates signaling via G-proteins. Subsequent receptor phosphorylation mediates displacement of the bound G-protein alpha subunit by arrestin and terminates signaling. The sequence is that of Rhodopsin (RHO) from Ambystoma tigrinum (Eastern tiger salamander).